A 216-amino-acid chain; its full sequence is Probable nicotinate-nucleotide adenylyltransferase (216 aa).

Belongs to the NadD family.

It carries out the reaction nicotinate beta-D-ribonucleotide + ATP + H(+) = deamido-NAD(+) + diphosphate. It participates in cofactor biosynthesis; NAD(+) biosynthesis; deamido-NAD(+) from nicotinate D-ribonucleotide: step 1/1. Catalyzes the reversible adenylation of nicotinate mononucleotide (NaMN) to nicotinic acid adenine dinucleotide (NaAD). The polypeptide is Probable nicotinate-nucleotide adenylyltransferase (Desulfatibacillum aliphaticivorans).